The chain runs to 258 residues: Flagellar brake protein YcgR (258 aa).

In terms of domain architecture, PilZ spans 131–248; sequence QKREYYRVAT…ALSLIQRYIT (118 aa).

This sequence belongs to the YcgR family. Monomer. Interacts with the flagellar basal bodies.

It is found in the bacterial flagellum basal body. In terms of biological role, acts as a flagellar brake, regulating swimming and swarming in a bis-(3'-5') cyclic diguanylic acid (c-di-GMP)-dependent manner. Binds 1 c-di-GMP dimer per subunit. Increasing levels of c-di-GMP lead to decreased motility. This Nitrosospira multiformis (strain ATCC 25196 / NCIMB 11849 / C 71) protein is Flagellar brake protein YcgR.